Reading from the N-terminus, the 208-residue chain is MANHQIKAQRRKDEGKGASRRLRHAGMIPAIIYGGEQRPVSIQLNHEQIWLAQQNEWFYSSILDLNVDGGGGEKVLLRDLQRHPYRQLVMHVDFQRVSSDAKLSVAVPLHFINQATSPAGKASGVVITHELNEVHVSCLPKDLPEFIEVDLSTLSVGHVIHLSDITFPIGVELSTRLDKEHDMAVVIAKHVVIEDDTPAEEEGEGDTK.

Residues Met1–Arg20 are disordered.

The protein belongs to the bacterial ribosomal protein bL25 family. CTC subfamily. In terms of assembly, part of the 50S ribosomal subunit; part of the 5S rRNA/L5/L18/L25 subcomplex. Contacts the 5S rRNA. Binds to the 5S rRNA independently of L5 and L18.

Functionally, this is one of the proteins that binds to the 5S RNA in the ribosome where it forms part of the central protuberance. The chain is Large ribosomal subunit protein bL25 from Xylella fastidiosa (strain 9a5c).